We begin with the raw amino-acid sequence, 239 residues long: ATP-dependent dethiobiotin synthetase BioD (239 aa).

22 to 27 (GIGKTV) serves as a coordination point for ATP. Position 26 (T26) interacts with Mg(2+). The active site involves K47. Substrate is bound at residue T51. ATP is bound by residues D59, 124-127 (EGVG), and 184-185 (NR). Mg(2+) is bound by residues D59 and E124.

This sequence belongs to the dethiobiotin synthetase family. Homodimer. Mg(2+) serves as cofactor.

It is found in the cytoplasm. The enzyme catalyses (7R,8S)-7,8-diammoniononanoate + CO2 + ATP = (4R,5S)-dethiobiotin + ADP + phosphate + 3 H(+). Its pathway is cofactor biosynthesis; biotin biosynthesis; biotin from 7,8-diaminononanoate: step 1/2. Catalyzes a mechanistically unusual reaction, the ATP-dependent insertion of CO2 between the N7 and N8 nitrogen atoms of 7,8-diaminopelargonic acid (DAPA, also called 7,8-diammoniononanoate) to form a ureido ring. The chain is ATP-dependent dethiobiotin synthetase BioD from Chlorobaculum tepidum (strain ATCC 49652 / DSM 12025 / NBRC 103806 / TLS) (Chlorobium tepidum).